The following is a 213-amino-acid chain: MRSNYIVIEGLEGAGKTTARQLVVETLQSAGIHDMVFTREPGGTILAEKLRSLVLDIQSTGDEVINDKAEVLMFYAARVQLVETVIKPALARGQWVIGDRHDLSTQAYQGGGRGIDRTMLATLRDAVLGDFRPNLTLYLDVTPEVGLQRARARGELDRIEQESMNFFNRTRARYLELAAADPSIRTVDATQPLDAVARDIRATIAQWMAEQAA.

10–17 (GLEGAGKT) serves as a coordination point for ATP.

Belongs to the thymidylate kinase family.

It carries out the reaction dTMP + ATP = dTDP + ADP. Phosphorylation of dTMP to form dTDP in both de novo and salvage pathways of dTTP synthesis. This chain is Thymidylate kinase, found in Klebsiella pneumoniae subsp. pneumoniae (strain ATCC 700721 / MGH 78578).